A 107-amino-acid polypeptide reads, in one-letter code: Universal stress protein B homolog (107 aa).

A run of 2 helical transmembrane segments spans residues 6–26 (IILF…LTAL) and 86–106 (VREL…AAFL).

Belongs to the universal stress protein B family.

It is found in the cell inner membrane. This Vibrio vulnificus (strain CMCP6) protein is Universal stress protein B homolog.